Consider the following 161-residue polypeptide: Ribosomal RNA large subunit methyltransferase H (161 aa).

S-adenosyl-L-methionine-binding positions include Leu78, Gly110, and 129–134 (LSRLTF).

The protein belongs to the RNA methyltransferase RlmH family. Homodimer.

It is found in the cytoplasm. The catalysed reaction is pseudouridine(1915) in 23S rRNA + S-adenosyl-L-methionine = N(3)-methylpseudouridine(1915) in 23S rRNA + S-adenosyl-L-homocysteine + H(+). Specifically methylates the pseudouridine at position 1915 (m3Psi1915) in 23S rRNA. In Heliobacterium modesticaldum (strain ATCC 51547 / Ice1), this protein is Ribosomal RNA large subunit methyltransferase H.